The following is a 195-amino-acid chain: MTPTLLSAFWTYTLITAMTPGPNNILALSSATTHGFHQSTRVLAGMSLGFLIVMLLCAGISFSLAVIDPAAVHLLSWAGAAYIVWLAWKIATSPTKEDGLQTKPISFWASFALQFVNVKIILYGVTALSTFVLPQTQALSWIVGVSVLLAMIGTFGNVCWALAGHLFQRLFRQYGRQLNIVLALLLIYCAVRIFY.

Residues 1-7 (MTPTLLS) lie on the Periplasmic side of the membrane. Residues 8–28 (AFWTYTLITAMTPGPNNILAL) traverse the membrane as a helical segment. Over 29 to 46 (SSATTHGFHQSTRVLAGM) the chain is Cytoplasmic. The helical transmembrane segment at 47–67 (SLGFLIVMLLCAGISFSLAVI) threads the bilayer. Topologically, residues 68–69 (DP) are periplasmic. The helical transmembrane segment at 70–90 (AAVHLLSWAGAAYIVWLAWKI) threads the bilayer. Residues 91 to 104 (ATSPTKEDGLQTKP) lie on the Cytoplasmic side of the membrane. A helical transmembrane segment spans residues 105-125 (ISFWASFALQFVNVKIILYGV). Over 126–141 (TALSTFVLPQTQALSW) the chain is Periplasmic. A helical membrane pass occupies residues 142 to 162 (IVGVSVLLAMIGTFGNVCWAL). At 163–176 (AGHLFQRLFRQYGR) the chain is on the cytoplasmic side. The helical transmembrane segment at 177-194 (QLNIVLALLLIYCAVRIF) threads the bilayer. Position 195 (Y195) is a topological domain, periplasmic.

This sequence belongs to the Rht family.

It localises to the cell inner membrane. It carries out the reaction O-acetyl-L-serine(in) = O-acetyl-L-serine(out). The enzyme catalyses L-cysteine(in) = L-cysteine(out). In terms of biological role, exporter of O-acetylserine (OAS) and cysteine. This Escherichia coli O157:H7 protein is Cysteine/O-acetylserine efflux protein (eamB).